The primary structure comprises 295 residues: ATP-dependent (S)-NAD(P)H-hydrate dehydratase (295 aa).

The YjeF C-terminal domain occupies 9 to 289 (LLERARNLVP…DQIHQVFDDL (281 aa)). Residues G109 and 162–168 (NAIEFCR) contribute to the (6S)-NADPHX site. ATP contacts are provided by residues 193–197 (KGLND) and 214–223 (GSGRRCGGQG). (6S)-NADPHX is bound at residue D224.

This sequence belongs to the NnrD/CARKD family. Mg(2+) is required as a cofactor.

It catalyses the reaction (6S)-NADHX + ATP = ADP + phosphate + NADH + H(+). It carries out the reaction (6S)-NADPHX + ATP = ADP + phosphate + NADPH + H(+). Functionally, catalyzes the dehydration of the S-form of NAD(P)HX at the expense of ATP, which is converted to ADP. Together with NAD(P)HX epimerase, which catalyzes the epimerization of the S- and R-forms, the enzyme allows the repair of both epimers of NAD(P)HX, a damaged form of NAD(P)H that is a result of enzymatic or heat-dependent hydration. The polypeptide is ATP-dependent (S)-NAD(P)H-hydrate dehydratase (Anopheles darlingi (Mosquito)).